Consider the following 688-residue polypeptide: MDFITINSINKTEEFALKQVAKQATSSLLYRLGKTIILASVCVERELVSEDFLPLVVQFLEKSYAAGKIPGGFVKREGRAQDFEILTSRLIDRTLRPLFPKDYRYPTQITLMVLSHDIENDLQVSALNAASAALFLAHAAPFKSVSACRIARIDNEFIINPSTSLLNQSSLDLFVSGTKESLNMIEMRSLGQKLNALEEPLMLEALELAQKSLKETCTLYEETFTPHQNALLFKESQGIVFNERLLDLLKNQYFNEIIKGIESSALSERENVFNEIARKISEAHSEFNLEEIELSLEKVKKTEIRRMIIRDKIRPDKRALEEVRPISIESNLLPMAHSSILFTRGQTQSLVVGVLGTDNDAQTHESLEHKAPIKERFMFHYNFPPFCVGEASSIGATSRRELGHGNLAKRALETSIKNKDQVIRLVSEILESNGSSSMASVCAGSLALYASGVEIHDLVAGVAMGMVSEGQDYAILSDISGLEDAEGDMDFKIAGNLEGITAMQMDTKMSGIQLEILYQTLLQAKRVREHILKIMHEAKEKIVINFSHLPTTEIFNVAPDKIIEIIGQGGRVIREIVEKFEVKIDLNKPSGEVKIMGNKERVLKTKEFILNYLHSLDQELEQYAIDEVLEAQVKRIVDFGAFLSLPKGGEGLLRKQHMERCQVALKEGDSIRCRVISFNKGKIALDLA.

Positions 484 and 490 each coordinate Mg(2+). Positions 550–609 constitute a KH domain; it reads PTTEIFNVAPDKIIEIIGQGGRVIREIVEKFEVKIDLNKPSGEVKIMGNKERVLKTKEFI. Residues 626–688 enclose the S1 motif domain; the sequence is DEVLEAQVKR…NKGKIALDLA (63 aa).

This sequence belongs to the polyribonucleotide nucleotidyltransferase family. Requires Mg(2+) as cofactor.

The protein localises to the cytoplasm. It carries out the reaction RNA(n+1) + phosphate = RNA(n) + a ribonucleoside 5'-diphosphate. In terms of biological role, involved in mRNA degradation. Catalyzes the phosphorolysis of single-stranded polyribonucleotides processively in the 3'- to 5'-direction. The sequence is that of Polyribonucleotide nucleotidyltransferase from Helicobacter acinonychis (strain Sheeba).